The sequence spans 681 residues: DNA-directed RNA polymerase subunit beta' (681 aa).

Zn(2+)-binding residues include cysteine 69, cysteine 71, cysteine 87, and cysteine 90. Residues aspartate 489, aspartate 491, and aspartate 493 each contribute to the Mg(2+) site.

It belongs to the RNA polymerase beta' chain family. RpoC1 subfamily. In plastids the minimal PEP RNA polymerase catalytic core is composed of four subunits: alpha, beta, beta', and beta''. When a (nuclear-encoded) sigma factor is associated with the core the holoenzyme is formed, which can initiate transcription. Mg(2+) is required as a cofactor. The cofactor is Zn(2+).

It localises to the plastid. The protein localises to the chloroplast. The catalysed reaction is RNA(n) + a ribonucleoside 5'-triphosphate = RNA(n+1) + diphosphate. Its function is as follows. DNA-dependent RNA polymerase catalyzes the transcription of DNA into RNA using the four ribonucleoside triphosphates as substrates. This is DNA-directed RNA polymerase subunit beta' from Atropa belladonna (Belladonna).